The following is a 222-amino-acid chain: Uracil-DNA glycosylase (222 aa).

The active-site Proton acceptor is the D66.

It belongs to the uracil-DNA glycosylase (UDG) superfamily. UNG family.

The protein localises to the cytoplasm. It catalyses the reaction Hydrolyzes single-stranded DNA or mismatched double-stranded DNA and polynucleotides, releasing free uracil.. Its function is as follows. Excises uracil residues from the DNA which can arise as a result of misincorporation of dUMP residues by DNA polymerase or due to deamination of cytosine. The chain is Uracil-DNA glycosylase from Porphyromonas gingivalis (strain ATCC 33277 / DSM 20709 / CIP 103683 / JCM 12257 / NCTC 11834 / 2561).